Consider the following 456-residue polypeptide: Phosphomethylpyrimidine synthase (456 aa).

Residues Asn-80, Met-109, Tyr-139, His-175, 195 to 197 (SRG), 236 to 239 (DSLR), and Glu-275 contribute to the substrate site. His-279 provides a ligand contact to Zn(2+). Tyr-302 is a substrate binding site. Position 343 (His-343) interacts with Zn(2+). [4Fe-4S] cluster is bound by residues Cys-423, Cys-426, and Cys-431.

This sequence belongs to the ThiC family. [4Fe-4S] cluster is required as a cofactor.

It carries out the reaction 5-amino-1-(5-phospho-beta-D-ribosyl)imidazole + S-adenosyl-L-methionine = 4-amino-2-methyl-5-(phosphooxymethyl)pyrimidine + CO + 5'-deoxyadenosine + formate + L-methionine + 3 H(+). The protein operates within cofactor biosynthesis; thiamine diphosphate biosynthesis. Catalyzes the synthesis of the hydroxymethylpyrimidine phosphate (HMP-P) moiety of thiamine from aminoimidazole ribotide (AIR) in a radical S-adenosyl-L-methionine (SAM)-dependent reaction. This Prochlorococcus marinus (strain MIT 9515) protein is Phosphomethylpyrimidine synthase.